Reading from the N-terminus, the 1640-residue chain is Phospholipase D C (1640 aa).

A compositionally biased stretch (polar residues) spans 122–132; the sequence is SHRSNQSFNHS. Disordered stretches follow at residues 122–247, 264–283, 439–499, and 521–541; these read SHRS…KRLS, HNQN…HTTT, EKQQ…YKYN, and DDEY…PSQE. Residues 133-193 show a composition bias toward low complexity; that stretch reads NSTTPLNTTN…YSSDNSYLHN (61 aa). Residues 197 to 231 are compositionally biased toward acidic residues; that stretch reads DIYEDEDDEDDEDDDDDEDEDDEGKEFEQDDEDES. The segment covering 232-247 has biased composition (polar residues); it reads TISSMSLKNSQAKRLS. Low complexity-rich tracts occupy residues 264–273 and 467–499; these read HNQNHQNHQN and TTTT…YKYN. Residues 521-534 are compositionally biased toward acidic residues; it reads DDEYYYGEYDDEDD. Residues 1009-1036 form the PLD phosphodiesterase 1 domain; sequence LYWSHHQKVVVVDQRIAFIGGLDLCFGR. Catalysis depends on residues H1014, K1016, and D1021. Low complexity-rich tracts occupy residues 1149 to 1274 and 1282 to 1296; these read INNN…NNLN and HNNS…QQQQ. The tract at residues 1149 to 1315 is disordered; sequence INNNNNNANN…YQPPLPPQQR (167 aa). Residues 1297–1306 show a composition bias toward basic residues; it reads QHHHHHHHHY. The PLD phosphodiesterase 2 domain occupies 1460–1487; the sequence is EQIYVHSKVLIVDDKIAIIGSANINDRS. Catalysis depends on residues H1465, K1467, and D1472.

The protein belongs to the phospholipase D family.

The enzyme catalyses a 1,2-diacyl-sn-glycero-3-phosphocholine + H2O = a 1,2-diacyl-sn-glycero-3-phosphate + choline + H(+). With respect to regulation, inhibited by butan-1-ol. Plays a role in cell growth. Hydrolyzes membrane phospholipids, such as PtdCho (phosphatidylcholine), producing the free headgroup and PtdOH (phosphatidic acid; signaling molecule on its own). Involved in the inhibition of actin-based motility and endocytosis. Its inhibition causes complete collapse of F-actin organization. The chain is Phospholipase D C (pldC) from Dictyostelium discoideum (Social amoeba).